A 551-amino-acid chain; its full sequence is Thermophilic beta-amylase (551 aa).

The N-terminal stretch at 1 to 32 (MIGAFKRLGQKLFLTLLTASLIFASSIVTANA) is a signal peptide. D73 provides a ligand contact to substrate. E80 provides a ligand contact to Ca(2+). Residues H113 and D121 each contribute to the substrate site. Residue E167 coordinates Ca(2+). Residue E195 is the Proton donor of the active site. Substrate contacts are provided by K310, H315, and T353. E392 functions as the Proton acceptor in the catalytic mechanism. Substrate contacts are provided by residues 393 to 394 (NA) and R423. Positions 448–551 (LTPNGTIPVT…TGSVTITWQN (104 aa)) constitute a CBM20 domain.

Belongs to the glycosyl hydrolase 14 family. In terms of assembly, monomer. It depends on Ca(2+) as a cofactor.

The enzyme catalyses Hydrolysis of (1-&gt;4)-alpha-D-glucosidic linkages in polysaccharides so as to remove successive maltose units from the non-reducing ends of the chains.. This is Thermophilic beta-amylase from Thermoanaerobacterium thermosulfurigenes (Clostridium thermosulfurogenes).